The chain runs to 739 residues: Elongation factor 2 (739 aa).

The tr-type G domain maps to 19–261; that stretch reads RNIRNIGIIA…MVALHVPDPI (243 aa). GTP contacts are provided by residues 28–35, 94–98, and 148–151; these read AHVDHGKT, DTPGH, and NKID. His603 carries the diphthamide modification.

It belongs to the TRAFAC class translation factor GTPase superfamily. Classic translation factor GTPase family. EF-G/EF-2 subfamily.

The protein localises to the cytoplasm. Catalyzes the GTP-dependent ribosomal translocation step during translation elongation. During this step, the ribosome changes from the pre-translocational (PRE) to the post-translocational (POST) state as the newly formed A-site-bound peptidyl-tRNA and P-site-bound deacylated tRNA move to the P and E sites, respectively. Catalyzes the coordinated movement of the two tRNA molecules, the mRNA and conformational changes in the ribosome. This Korarchaeum cryptofilum (strain OPF8) protein is Elongation factor 2.